The following is a 417-amino-acid chain: Gamma-glutamyl phosphate reductase (417 aa).

It belongs to the gamma-glutamyl phosphate reductase family.

The protein localises to the cytoplasm. It catalyses the reaction L-glutamate 5-semialdehyde + phosphate + NADP(+) = L-glutamyl 5-phosphate + NADPH + H(+). Its pathway is amino-acid biosynthesis; L-proline biosynthesis; L-glutamate 5-semialdehyde from L-glutamate: step 2/2. Functionally, catalyzes the NADPH-dependent reduction of L-glutamate 5-phosphate into L-glutamate 5-semialdehyde and phosphate. The product spontaneously undergoes cyclization to form 1-pyrroline-5-carboxylate. In Legionella pneumophila (strain Corby), this protein is Gamma-glutamyl phosphate reductase.